An 828-amino-acid chain; its full sequence is Phenylalanine--tRNA ligase beta subunit (828 aa).

The tRNA-binding domain occupies 43–161; it reads LSKNTNLVVG…DQIALGSNAL (119 aa). Positions 203–230 are disordered; sequence KKKEKKTINYKTKNSKDQTNRKTTPKLN. The region spanning 436–519 is the B5 domain; that stretch reads RTNPTISLDL…RFYGCHKLPP (84 aa). Mg(2+) contacts are provided by D497, D503, and D507. The FDX-ACB domain occupies 736–828; sequence PKFPTVIRDL…LIKHFRIEIR (93 aa).

Belongs to the phenylalanyl-tRNA synthetase beta subunit family. Type 1 subfamily. As to quaternary structure, tetramer of two alpha and two beta subunits. Requires Mg(2+) as cofactor.

The protein localises to the cytoplasm. It carries out the reaction tRNA(Phe) + L-phenylalanine + ATP = L-phenylalanyl-tRNA(Phe) + AMP + diphosphate + H(+). The polypeptide is Phenylalanine--tRNA ligase beta subunit (Aster yellows witches'-broom phytoplasma (strain AYWB)).